We begin with the raw amino-acid sequence, 458 residues long: UPF0210 protein Mevan_0738 (458 aa).

This sequence belongs to the UPF0210 family.

This chain is UPF0210 protein Mevan_0738, found in Methanococcus vannielii (strain ATCC 35089 / DSM 1224 / JCM 13029 / OCM 148 / SB).